A 224-amino-acid polypeptide reads, in one-letter code: Cytidylate kinase (224 aa).

11-19 (GPASAGKST) provides a ligand contact to ATP.

This sequence belongs to the cytidylate kinase family. Type 1 subfamily.

The protein localises to the cytoplasm. The catalysed reaction is CMP + ATP = CDP + ADP. It carries out the reaction dCMP + ATP = dCDP + ADP. The chain is Cytidylate kinase from Ligilactobacillus salivarius (strain UCC118) (Lactobacillus salivarius).